The primary structure comprises 389 residues: Ethanolamine-phosphate cytidylyltransferase (389 aa).

Residues 221-222, 229-232, Lys-259, 307-310, and 336-340 each bind CTP; these read AF, HVDF, HGKT, and SGNDL. Residues Thr-341 and Thr-342 each carry the phosphothreonine modification.

The protein belongs to the cytidylyltransferase family.

It carries out the reaction phosphoethanolamine + CTP + H(+) = CDP-ethanolamine + diphosphate. It participates in phospholipid metabolism; phosphatidylethanolamine biosynthesis; phosphatidylethanolamine from ethanolamine: step 2/3. Its function is as follows. Ethanolamine-phosphate cytidylyltransferase that catalyzes the second step in the synthesis of phosphatidylethanolamine (PE) from ethanolamine via the CDP-ethanolamine pathway. Phosphatidylethanolamine is a dominant inner-leaflet phospholipid in cell membranes, where it plays a role in membrane function by structurally stabilizing membrane-anchored proteins, and participates in important cellular processes such as cell division, cell fusion, blood coagulation, and apoptosis. The polypeptide is Ethanolamine-phosphate cytidylyltransferase (PCYT2) (Bos taurus (Bovine)).